We begin with the raw amino-acid sequence, 207 residues long: Lipid A acyltransferase PagP (207 aa).

A signal peptide spans 1-24 (MKFDLTAACTLSATLLVSSGTVFA). Active-site residues include H79, D122, and S123.

It belongs to the lipid A palmitoyltransferase family. As to quaternary structure, homodimer.

It localises to the cell outer membrane. It catalyses the reaction a lipid A + a 1,2-diacyl-sn-glycero-3-phosphocholine = a hepta-acyl lipid A + a 2-acyl-sn-glycero-3-phosphocholine. The enzyme catalyses a lipid IVA + a 1,2-diacyl-sn-glycero-3-phosphocholine = a lipid IVB + a 2-acyl-sn-glycero-3-phosphocholine. It carries out the reaction a lipid IIA + a 1,2-diacyl-sn-glycero-3-phosphocholine = a lipid IIB + a 2-acyl-sn-glycero-3-phosphocholine. Its function is as follows. Transfers a fatty acid residue from the sn-1 position of a phospholipid to the N-linked hydroxyfatty acid chain on the proximal unit of lipid A or its precursors. In Photorhabdus laumondii subsp. laumondii (strain DSM 15139 / CIP 105565 / TT01) (Photorhabdus luminescens subsp. laumondii), this protein is Lipid A acyltransferase PagP.